The primary structure comprises 157 residues: 2-C-methyl-D-erythritol 2,4-cyclodiphosphate synthase (157 aa).

2 residues coordinate a divalent metal cation: D8 and H10. Residues 8–10 (DVH) and 34–35 (HS) each bind 4-CDP-2-C-methyl-D-erythritol 2-phosphate. Position 42 (H42) interacts with a divalent metal cation. Residues 56-58 (DIG), 61-65 (FPDTD), 100-106 (AQAPKMA), 132-135 (TTEE), F139, and R142 each bind 4-CDP-2-C-methyl-D-erythritol 2-phosphate.

This sequence belongs to the IspF family. Homotrimer. A divalent metal cation serves as cofactor.

It catalyses the reaction 4-CDP-2-C-methyl-D-erythritol 2-phosphate = 2-C-methyl-D-erythritol 2,4-cyclic diphosphate + CMP. It participates in isoprenoid biosynthesis; isopentenyl diphosphate biosynthesis via DXP pathway; isopentenyl diphosphate from 1-deoxy-D-xylulose 5-phosphate: step 4/6. In terms of biological role, involved in the biosynthesis of isopentenyl diphosphate (IPP) and dimethylallyl diphosphate (DMAPP), two major building blocks of isoprenoid compounds. Catalyzes the conversion of 4-diphosphocytidyl-2-C-methyl-D-erythritol 2-phosphate (CDP-ME2P) to 2-C-methyl-D-erythritol 2,4-cyclodiphosphate (ME-CPP) with a corresponding release of cytidine 5-monophosphate (CMP). In Pseudomonas entomophila (strain L48), this protein is 2-C-methyl-D-erythritol 2,4-cyclodiphosphate synthase.